Consider the following 567-residue polypeptide: Mitogen-activated protein kinase 16 (567 aa).

In terms of domain architecture, Protein kinase spans 25–316 (YRIEEVIGKG…AEEALADVYF (292 aa)). ATP-binding positions include 31–39 (IGKGSYGVV) and K54. Catalysis depends on D151, which acts as the Proton acceptor. Position 187 is a phosphothreonine (T187). A TXY motif is present at residues 187–189 (TDY). Y189 carries the phosphotyrosine modification. T192 carries the post-translational modification Phosphothreonine. 2 disordered regions span residues 428-455 (AQQSSAEVTDGLSKCSIRDERPRGADRN) and 512-567 (PAAA…SRWY). The segment covering 443–453 (SIRDERPRGAD) has biased composition (basic and acidic residues). Residues 545-567 (KPNTQYIPQKVSAAQDTAMSRWY) are compositionally biased toward polar residues.

The protein belongs to the protein kinase superfamily. CMGC Ser/Thr protein kinase family. MAP kinase subfamily. In terms of processing, dually phosphorylated on Thr-187 and Tyr-189, which activates the enzyme.

The enzyme catalyses L-seryl-[protein] + ATP = O-phospho-L-seryl-[protein] + ADP + H(+). It carries out the reaction L-threonyl-[protein] + ATP = O-phospho-L-threonyl-[protein] + ADP + H(+). Activated by threonine and tyrosine phosphorylation. In Arabidopsis thaliana (Mouse-ear cress), this protein is Mitogen-activated protein kinase 16 (MPK16).